Here is a 347-residue protein sequence, read N- to C-terminus: Quinolinate synthase (347 aa).

The iminosuccinate site is built by histidine 47 and serine 68. Position 113 (cysteine 113) interacts with [4Fe-4S] cluster. Iminosuccinate contacts are provided by residues 139-141 (YAN) and serine 156. Residue cysteine 200 coordinates [4Fe-4S] cluster. Residues 226–228 (HPE) and threonine 243 contribute to the iminosuccinate site. Cysteine 297 lines the [4Fe-4S] cluster pocket.

The protein belongs to the quinolinate synthase family. Type 1 subfamily. The cofactor is [4Fe-4S] cluster.

The protein resides in the cytoplasm. It catalyses the reaction iminosuccinate + dihydroxyacetone phosphate = quinolinate + phosphate + 2 H2O + H(+). It functions in the pathway cofactor biosynthesis; NAD(+) biosynthesis; quinolinate from iminoaspartate: step 1/1. Functionally, catalyzes the condensation of iminoaspartate with dihydroxyacetone phosphate to form quinolinate. This chain is Quinolinate synthase, found in Salmonella choleraesuis (strain SC-B67).